Reading from the N-terminus, the 490-residue chain is Cruciferin BnC1 (490 aa).

The N-terminal stretch at 1–23 is a signal peptide; sequence MARLSSLLSFSLALLIFLHGSTA. Intrachain disulfides connect Cys-30/Cys-63 and Cys-106/Cys-307. Cupin type-1 domains are found at residues 35 to 263 and 313 to 462; these read LNAL…RTAQ and DNLD…EEAR. The residue at position 109 (Thr-109) is a Phosphothreonine. Residues 113–164 are disordered; that stretch reads SSVFQPSGGSPSGEGQGQGQQGQGQGHQGQGQGQQGQQGQQGQQSQGQGFRD. Over residues 122–148 the composition is skewed to gly residues; it reads SPSGEGQGQGQQGQGQGHQGQGQGQQG. A compositionally biased stretch (low complexity) spans 149–161; it reads QQGQQGQQSQGQG. Tyr-330 carries the phosphotyrosine modification. Ser-332 carries the post-translational modification Phosphoserine. At Thr-426 the chain carries Phosphothreonine.

This sequence belongs to the 11S seed storage protein (globulins) family. Hexamer; each subunit is composed of an acidic and a basic chain derived from a single precursor and linked by a disulfide bond.

In terms of biological role, this is a seed storage protein. The sequence is that of Cruciferin BnC1 (BnC1) from Brassica napus (Rape).